A 402-amino-acid chain; its full sequence is NADH-quinone oxidoreductase subunit D (402 aa).

Belongs to the complex I 49 kDa subunit family. NDH-1 is composed of 14 different subunits. Subunits NuoB, C, D, E, F, and G constitute the peripheral sector of the complex.

It localises to the cell inner membrane. It catalyses the reaction a quinone + NADH + 5 H(+)(in) = a quinol + NAD(+) + 4 H(+)(out). Functionally, NDH-1 shuttles electrons from NADH, via FMN and iron-sulfur (Fe-S) centers, to quinones in the respiratory chain. The immediate electron acceptor for the enzyme in this species is believed to be ubiquinone. Couples the redox reaction to proton translocation (for every two electrons transferred, four hydrogen ions are translocated across the cytoplasmic membrane), and thus conserves the redox energy in a proton gradient. The chain is NADH-quinone oxidoreductase subunit D from Rhodopseudomonas palustris (strain ATCC BAA-98 / CGA009).